Here is a 472-residue protein sequence, read N- to C-terminus: Alanine--anticapsin ligase (472 aa).

Glu-109 serves as a coordination point for Mg(2+). 2 residues coordinate ATP: Lys-138 and Lys-178. In terms of domain architecture, ATP-grasp spans 142 to 355 (RAAFNRAGVK…MAQLLLDVLC (214 aa)). Leu-182 lines the Mg(2+) pocket. ATP is bound by residues 184-185 (SS), 226-229 (EEFL), and Gln-268. Substrate contacts are provided by residues Glu-273 and 309–311 (HTE). 2 residues coordinate Mg(2+): Glu-311 and Glu-324. 328–331 (RFAG) serves as a coordination point for substrate.

In terms of assembly, monomer or homodimer. The cofactor is Mg(2+).

The enzyme catalyses L-anticapsin + L-alanine + ATP = bacilysin + ADP + phosphate + H(+). The protein operates within antibiotic biosynthesis; bacilysin biosynthesis. Part of the bacABCDEFG operon responsible for the biosynthesis of bacilysin, an irreversible inactivator of the glutaminase domain of glucosamine synthetase. Catalyzes the formation of alpha-dipeptides from various L-amino acids in the presence of ATP. In vivo catalyzes the ligation of L-alanine and L-anticapsin (epoxycyclohexanonyl-Ala) to produce the final bacilysin antibiotic (L-Ala-L-4S-cyclohexenonyl-Ala dipeptide). This is Alanine--anticapsin ligase from Bacillus amyloliquefaciens (Bacillus velezensis).